We begin with the raw amino-acid sequence, 828 residues long: Protein ELFN1 (828 aa).

Residues 1–27 form the signal peptide; sequence MAGRGWGALWVCVAAATLLHAGGLARA. Topologically, residues 28-418 are extracellular; it reads DCWLIEGDKG…VPSPSTATHY (391 aa). Residue asparagine 59 is glycosylated (N-linked (GlcNAc...) asparagine). LRR repeat units lie at residues 61–82, 85–106, 109–130, 133–154, and 157–178; these read TIVDLRLNENRIRSVQYASLSR, NLTYLNLTKNEIGYIEDGAFSG, NLQVLQLGYNRLRNLTEGMLRG, KLEYLYLQANLIEVVMASSFWE, and NIVNIDLSMNRIQQLNSGTFAG. 3 N-linked (GlcNAc...) asparagine glycosylation sites follow: asparagine 85, asparagine 90, and asparagine 122. Residues 190-252 enclose the LRRCT domain; sequence NPFYCSCELL…LSKLQSVCTE (63 aa). N-linked (GlcNAc...) asparagine glycosylation occurs at asparagine 210. Residues 259-291 are disordered; sequence VVGPPRPASGRSQPGRSPPPPPPPEPSDMPCAD. Positions 274 to 285 are enriched in pro residues; that stretch reads RSPPPPPPPEPS. Residues 312–399 form the Fibronectin type-III domain; the sequence is QAEARPLIKV…HNHTCLTICL (88 aa). Residues 318-342 form an LRR 6 repeat; the sequence is LIKVKQLTQNSATITVQLPSPFHRM. Asparagine 376 carries an N-linked (GlcNAc...) asparagine glycan. The chain crosses the membrane as a helical span at residues 419 to 439; the sequence is IMTILGCLFGMVLVLGAVYYC. Residues 440-828 are Cytoplasmic-facing; that stretch reads LRRRRRQEEK…WKGVSAQHKS (389 aa). Phosphoserine is present on serine 461. 3 disordered regions span residues 517 to 552, 624 to 649, and 696 to 732; these read TPKASKGSYMEVRTGDPPERRDCELGRPGPDSQSSV, LQRHHSVEAAGPPRASTSSSGSVRSP, and KGRQYGEHRHSYPGSHPAEPPAPPGPPPPPPHEGLGR. The span at 529–541 shows a compositional bias: basic and acidic residues; the sequence is RTGDPPERRDCEL. The segment covering 632–649 has biased composition (low complexity); sequence AAGPPRASTSSSGSVRSP. At serine 645 the chain carries Phosphoserine. A compositionally biased stretch (basic and acidic residues) spans 696–705; that stretch reads KGRQYGEHRH. The segment covering 713–727 has biased composition (pro residues); the sequence is AEPPAPPGPPPPPPH.

Interacts with PPP1CA.

It is found in the membrane. The protein localises to the cell projection. Its subcellular location is the dendrite. Postsynaptic protein that regulates circuit dynamics in the central nervous system by modulating the temporal dynamics of interneuron recruitment. Specifically present in excitatory synapses onto oriens-lacunosum molecular (OLM) interneurons and acts as a regulator of presynaptic release probability to direct the formation of highly facilitating pyramidal-OLM synapses. Inhibits phosphatase activity of protein phosphatase 1 (PP1) complexes. The protein is Protein ELFN1 (ELFN1) of Homo sapiens (Human).